The chain runs to 348 residues: tRNA N6-adenosine threonylcarbamoyltransferase (348 aa).

Residues H109 and H113 each coordinate Fe cation. Substrate is bound by residues T136–G140, D169, G182, D186, and N284. D312 is a Fe cation binding site.

This sequence belongs to the KAE1 / TsaD family. Requires Fe(2+) as cofactor.

It localises to the cytoplasm. It carries out the reaction L-threonylcarbamoyladenylate + adenosine(37) in tRNA = N(6)-L-threonylcarbamoyladenosine(37) in tRNA + AMP + H(+). Its function is as follows. Required for the formation of a threonylcarbamoyl group on adenosine at position 37 (t(6)A37) in tRNAs that read codons beginning with adenine. Is involved in the transfer of the threonylcarbamoyl moiety of threonylcarbamoyl-AMP (TC-AMP) to the N6 group of A37, together with TsaE and TsaB. TsaD likely plays a direct catalytic role in this reaction. The chain is tRNA N6-adenosine threonylcarbamoyltransferase from Chlorobium luteolum (strain DSM 273 / BCRC 81028 / 2530) (Pelodictyon luteolum).